The chain runs to 510 residues: Glycerol kinase (510 aa).

Thr13 serves as a coordination point for ADP. ATP is bound by residues Thr13 and Thr14. Position 13 (Thr13) interacts with sn-glycerol 3-phosphate. Arg17 provides a ligand contact to ADP. Arg83, Glu84, Tyr135, and Asp255 together coordinate sn-glycerol 3-phosphate. The glycerol site is built by Arg83, Glu84, Tyr135, Asp255, and Gln256. Residues Thr277, Gly321, Gly421, and Asn425 each coordinate ADP. Residues Thr277, Gly321, and Gly421 each coordinate ATP.

Belongs to the FGGY kinase family.

The enzyme catalyses glycerol + ATP = sn-glycerol 3-phosphate + ADP + H(+). It participates in polyol metabolism; glycerol degradation via glycerol kinase pathway; sn-glycerol 3-phosphate from glycerol: step 1/1. Its function is as follows. Key enzyme in the regulation of glycerol uptake and metabolism. Catalyzes the phosphorylation of glycerol to yield sn-glycerol 3-phosphate. This is Glycerol kinase from Halobacterium salinarum (strain ATCC 29341 / DSM 671 / R1).